The chain runs to 192 residues: uncharacterized protein (192 aa).

This is an uncharacterized protein from Acidianus convivator (ATV).